Consider the following 131-residue polypeptide: Ribosome-binding factor A (131 aa).

Belongs to the RbfA family. In terms of assembly, monomer. Binds 30S ribosomal subunits, but not 50S ribosomal subunits or 70S ribosomes.

It localises to the cytoplasm. Functionally, one of several proteins that assist in the late maturation steps of the functional core of the 30S ribosomal subunit. Associates with free 30S ribosomal subunits (but not with 30S subunits that are part of 70S ribosomes or polysomes). Required for efficient processing of 16S rRNA. May interact with the 5'-terminal helix region of 16S rRNA. The sequence is that of Ribosome-binding factor A from Chromohalobacter salexigens (strain ATCC BAA-138 / DSM 3043 / CIP 106854 / NCIMB 13768 / 1H11).